We begin with the raw amino-acid sequence, 374 residues long: Carbamoyl phosphate synthase small chain (374 aa).

Residues 1-186 form a CPSase region; the sequence is MTEHAILVLE…DRNECKRAAP (186 aa). L-glutamine-binding residues include S47, G237, and G239. In terms of domain architecture, Glutamine amidotransferase type-1 spans 189-374; it reads KVVAYDYGVK…RFITMMAAQS (186 aa). The Nucleophile role is filled by C265. Positions 266, 269, 307, 309, and 310 each coordinate L-glutamine. Residues H349 and E351 contribute to the active site.

It belongs to the CarA family. Composed of two chains; the small (or glutamine) chain promotes the hydrolysis of glutamine to ammonia, which is used by the large (or ammonia) chain to synthesize carbamoyl phosphate. Tetramer of heterodimers (alpha,beta)4.

The enzyme catalyses hydrogencarbonate + L-glutamine + 2 ATP + H2O = carbamoyl phosphate + L-glutamate + 2 ADP + phosphate + 2 H(+). The catalysed reaction is L-glutamine + H2O = L-glutamate + NH4(+). Its pathway is amino-acid biosynthesis; L-arginine biosynthesis; carbamoyl phosphate from bicarbonate: step 1/1. It participates in pyrimidine metabolism; UMP biosynthesis via de novo pathway; (S)-dihydroorotate from bicarbonate: step 1/3. Small subunit of the glutamine-dependent carbamoyl phosphate synthetase (CPSase). CPSase catalyzes the formation of carbamoyl phosphate from the ammonia moiety of glutamine, carbonate, and phosphate donated by ATP, constituting the first step of 2 biosynthetic pathways, one leading to arginine and/or urea and the other to pyrimidine nucleotides. The small subunit (glutamine amidotransferase) binds and cleaves glutamine to supply the large subunit with the substrate ammonia. In Xylella fastidiosa (strain Temecula1 / ATCC 700964), this protein is Carbamoyl phosphate synthase small chain.